A 185-amino-acid chain; its full sequence is MINDILNEADGKMDKSVEATREEFAAIRAGRVNPSMFNKIVVDYYGSPTPLQQLASFTAPEARIILIAPYDQGAMHNILKAIRDSDLGVNPADDGKVIRCVFPELTEERRKEYIKISRHKAEEGRVAVRNLRRTAKQHLERLEKDGEVGQDDLTGAEKRLDGLTKKHTDAIDEMLKHKEAELLEV.

The protein belongs to the RRF family.

Its subcellular location is the cytoplasm. Responsible for the release of ribosomes from messenger RNA at the termination of protein biosynthesis. May increase the efficiency of translation by recycling ribosomes from one round of translation to another. The polypeptide is Ribosome-recycling factor (Nocardioides sp. (strain ATCC BAA-499 / JS614)).